Here is a 243-residue protein sequence, read N- to C-terminus: Venom nerve growth factor 1 (243 aa).

The N-terminal stretch at 1–18 (MSMLCYTLIIAFLIGIWA) is a signal peptide. Positions 19–125 (APKSEDNVPL…TLNRNIRAKR (107 aa)) are excised as a propeptide. Basic and acidic residues predominate over residues 47–66 (GLKTSRNTDQRHPAPKKAED). The segment at 47 to 69 (GLKTSRNTDQRHPAPKKAEDQEL) is disordered. 3 disulfide bridges follow: C139–C204, C182–C232, and C192–C234. N148 is a glycosylation site (N-linked (GlcNAc...) asparagine).

This sequence belongs to the NGF-beta family. Homodimer; non-covalently linked. As to expression, expressed by the venom gland.

The protein localises to the secreted. Functionally, nerve growth factor is important for the development and maintenance of the sympathetic and sensory nervous systems. It stimulates division and differentiation of sympathetic and embryonic sensory neurons as well as basal forebrain cholinergic neurons in the brain. Its relevance in the snake venom is not clear. However, it has been shown to inhibit metalloproteinase-dependent proteolysis of platelet glycoprotein Ib alpha, suggesting a metalloproteinase inhibition to prevent metalloprotease autodigestion and/or protection against prey proteases. Binds a lipid between the two protein chains in the homodimer. The lipid-bound form promotes histamine relase from mouse mast cells, contrary to the lipid-free form. This chain is Venom nerve growth factor 1, found in Pseudonaja textilis (Eastern brown snake).